The sequence spans 156 residues: Small ribosomal subunit protein uS7 (156 aa).

Belongs to the universal ribosomal protein uS7 family. As to quaternary structure, part of the 30S ribosomal subunit. Contacts proteins S9 and S11.

Functionally, one of the primary rRNA binding proteins, it binds directly to 16S rRNA where it nucleates assembly of the head domain of the 30S subunit. Is located at the subunit interface close to the decoding center, probably blocks exit of the E-site tRNA. The protein is Small ribosomal subunit protein uS7 of Streptococcus agalactiae serotype Ia (strain ATCC 27591 / A909 / CDC SS700).